Consider the following 449-residue polypeptide: Jacalin-related lectin 20 (449 aa).

2 disordered regions span residues 1-20 (MAQR…DDGA) and 294-314 (APPI…GDGG). Ala-2 is subject to N-acetylalanine. Jacalin-type lectin domains lie at 2 to 144 (AQRL…YFTP), 147 to 294 (PIKQ…HFGA), and 303 to 446 (TEKL…TVAP).

It belongs to the jacalin lectin family.

In Arabidopsis thaliana (Mouse-ear cress), this protein is Jacalin-related lectin 20 (JAL20).